The sequence spans 430 residues: Ribosomal protein uS12 methylthiotransferase RimO (430 aa).

The region spanning I2 to K119 is the MTTase N-terminal domain. 6 residues coordinate [4Fe-4S] cluster: C11, C46, C81, C145, C149, and C152. In terms of domain architecture, Radical SAM core spans S131–E361. Residues A364 to A430 enclose the TRAM domain.

This sequence belongs to the methylthiotransferase family. RimO subfamily. [4Fe-4S] cluster serves as cofactor.

The protein localises to the cytoplasm. The enzyme catalyses L-aspartate(89)-[ribosomal protein uS12]-hydrogen + (sulfur carrier)-SH + AH2 + 2 S-adenosyl-L-methionine = 3-methylsulfanyl-L-aspartate(89)-[ribosomal protein uS12]-hydrogen + (sulfur carrier)-H + 5'-deoxyadenosine + L-methionine + A + S-adenosyl-L-homocysteine + 2 H(+). Its function is as follows. Catalyzes the methylthiolation of an aspartic acid residue of ribosomal protein uS12. In Nitratidesulfovibrio vulgaris (strain ATCC 29579 / DSM 644 / CCUG 34227 / NCIMB 8303 / VKM B-1760 / Hildenborough) (Desulfovibrio vulgaris), this protein is Ribosomal protein uS12 methylthiotransferase RimO.